A 269-amino-acid chain; its full sequence is Xyloglucan endotransglucosylase/hydrolase protein 24 (269 aa).

The signal sequence occupies residues 1 to 21 (MSPFKIFFFTTLLVAAFSVSA). Residues 22-212 (ADFNTDVNVA…WSKAPFMASY (191 aa)) form the GH16 domain. The active-site Nucleophile is the Glu98. Glu102 (proton donor) is an active-site residue. A xyloglucan-binding site is contributed by Glu102. Asn106 is a glycosylation site (N-linked (GlcNAc...) asparagine). Xyloglucan is bound by residues 115–117 (HTN), 125–127 (DKE), 191–192 (DW), Gly196, and Arg256. A disulfide bridge links Cys251 with Cys265.

Belongs to the glycosyl hydrolase 16 family. XTH group 2 subfamily. Post-translationally, contains at least one intrachain disulfide bond essential for its enzymatic activity. In terms of processing, N-glycosylated; essential for its enzymatic activity. As to expression, highly expressed. Predominantly expressed in stems. Expressed in shoot apical meristems, also found in seedlings and meristems.

The protein localises to the secreted. It localises to the cell wall. It is found in the extracellular space. The protein resides in the apoplast. It carries out the reaction breaks a beta-(1-&gt;4) bond in the backbone of a xyloglucan and transfers the xyloglucanyl segment on to O-4 of the non-reducing terminal glucose residue of an acceptor, which can be a xyloglucan or an oligosaccharide of xyloglucan.. Its function is as follows. Catalyzes xyloglucan endohydrolysis (XEH) and/or endotransglycosylation (XET). Cleaves and religates xyloglucan polymers, an essential constituent of the primary cell wall, and thereby participates in cell wall construction of growing tissues. May be required during development to modify the walls of cells under mechanical stress. In Arabidopsis thaliana (Mouse-ear cress), this protein is Xyloglucan endotransglucosylase/hydrolase protein 24 (XTH24).